The chain runs to 265 residues: Speedy protein E12 (265 aa).

The disordered stretch occupies residues 1 to 80; sequence MGQILGKIMM…EPEKELAPEP (80 aa). The span at 13–23 shows a compositional bias: low complexity; sequence QPQPQEEQSPQ. Over residues 66 to 80 the composition is skewed to acidic residues; it reads DESDDEPEKELAPEP.

It belongs to the Speedy/Ringo family.

In Homo sapiens (Human), this protein is Speedy protein E12.